The following is a 102-amino-acid chain: Small ribosomal subunit protein uS10 (102 aa).

This sequence belongs to the universal ribosomal protein uS10 family. In terms of assembly, part of the 30S ribosomal subunit.

Functionally, involved in the binding of tRNA to the ribosomes. The chain is Small ribosomal subunit protein uS10 from Rhizobium meliloti (strain 1021) (Ensifer meliloti).